The chain runs to 220 residues: U1 small nuclear ribonucleoprotein C (220 aa).

Residues 4–36 (YYCDYCDIYLTHDSMNARKAHNSGRNHVANVRD) form a Matrin-type zinc finger. 2 stretches are compositionally biased toward pro residues: residues 88–130 (PGPP…PFLP) and 147–165 (PPFP…PFRP). The disordered stretch occupies residues 88–220 (PGPPPPGAFP…HPDRLRMLGQ (133 aa)). Low complexity predominate over residues 166–200 (PMGMGMPPAPAQAQAQGSPMGMPQQGQQGTFTPTQ). The span at 211 to 220 (HPDRLRMLGQ) shows a compositional bias: basic and acidic residues.

This sequence belongs to the U1 small nuclear ribonucleoprotein C family. In terms of assembly, U1 snRNP is composed of the 7 core Sm proteins B/B', D1, D2, D3, E, F and G that assemble in a heptameric protein ring on the Sm site of the small nuclear RNA to form the core snRNP, and at least 3 U1 snRNP-specific proteins U1-70K, U1-A and U1-C. U1-C interacts with U1 snRNA and the 5' splice-site region of the pre-mRNA.

Its subcellular location is the nucleus. Component of the spliceosomal U1 snRNP, which is essential for recognition of the pre-mRNA 5' splice-site and the subsequent assembly of the spliceosome. U1-C is directly involved in initial 5' splice-site recognition for both constitutive and regulated alternative splicing. The interaction with the 5' splice-site seems to precede base-pairing between the pre-mRNA and the U1 snRNA. Stimulates commitment or early (E) complex formation by stabilizing the base pairing of the 5' end of the U1 snRNA and the 5' splice-site region. In Cryptococcus neoformans var. neoformans serotype D (strain JEC21 / ATCC MYA-565) (Filobasidiella neoformans), this protein is U1 small nuclear ribonucleoprotein C.